Consider the following 201-residue polypeptide: Small ribosomal subunit protein uS4c (201 aa).

Positions 20–44 (GLTNKKPRAGSDLRNQSRSGKKSQY) are disordered. Residues 89–150 (MRLDNILFRL…EQKSKALIQI (62 aa)) form the S4 RNA-binding domain.

Belongs to the universal ribosomal protein uS4 family. As to quaternary structure, part of the 30S ribosomal subunit. Contacts protein S5. The interaction surface between S4 and S5 is involved in control of translational fidelity.

The protein resides in the plastid. It is found in the chloroplast. Its function is as follows. One of the primary rRNA binding proteins, it binds directly to 16S rRNA where it nucleates assembly of the body of the 30S subunit. Functionally, with S5 and S12 plays an important role in translational accuracy. The polypeptide is Small ribosomal subunit protein uS4c (rps4) (Nicotiana tomentosiformis (Tobacco)).